We begin with the raw amino-acid sequence, 371 residues long: GPI mannosyltransferase 1 (371 aa).

A run of 8 helical transmembrane segments spans residues 64–84, 120–140, 144–164, 190–210, 248–268, 290–310, 318–338, and 344–364; these read FPSW…WLMI, AILG…SVWL, ILGF…AFLV, IVVG…YLYG, ASSL…PLVF, VCTS…LPNS, LICL…AYNL, and SVFI…VYEL.

Belongs to the PIGM family.

The protein resides in the endoplasmic reticulum membrane. Its pathway is glycolipid biosynthesis; glycosylphosphatidylinositol-anchor biosynthesis. In terms of biological role, mannosyltransferase involved in glycosylphosphatidylinositol-anchor biosynthesis. Transfers the first alpha-1,4-mannose to GlcN-acyl-PI during GPI precursor assembly. Required for cell wall integrity. The polypeptide is GPI mannosyltransferase 1 (gpi14) (Schizosaccharomyces pombe (strain 972 / ATCC 24843) (Fission yeast)).